Reading from the N-terminus, the 716-residue chain is Astellifadiene synthase (716 aa).

Residues Met1 to Phe323 are terpene cyclase. Position 92 (Asp92) interacts with Mg(2+). Residues Asp92, Arg179–Asp182, Asn223, Ser227–Glu231, and Arg316–Tyr317 contribute to the substrate site. Positions Asp92 to Asp96 match the DDXXD 1 motif. The NSE/DTE signature appears at Asn223–Glu231. Residues Ser324–Leu713 are prenyltransferase. Isopentenyl diphosphate is bound by residues Lys436, Arg439, and His468. Mg(2+) is bound by residues Asp475 and Asp479. The short motif at Asp475 to Asp479 is the DDXXD 2 element. Arg484 is a dimethylallyl diphosphate binding site. Arg485 is an isopentenyl diphosphate binding site. Residues Lys562, Thr563, Gln598, Asn605, Lys615, and Lys625 each contribute to the dimethylallyl diphosphate site.

In the N-terminal section; belongs to the terpene synthase family. The protein in the C-terminal section; belongs to the FPP/GGPP synthase family. Hexamer. It depends on Mg(2+) as a cofactor.

It carries out the reaction isopentenyl diphosphate + (2E,6E)-farnesyl diphosphate = (2E,6E,10E)-geranylgeranyl diphosphate + diphosphate. The enzyme catalyses isopentenyl diphosphate + (2E,6E,10E)-geranylgeranyl diphosphate = (2E,6E,10E,14E)-geranylfarnesyl diphosphate + diphosphate. The catalysed reaction is (2E,6E,10E,14E)-geranylfarnesyl diphosphate = astellifadiene + diphosphate. It functions in the pathway secondary metabolite biosynthesis; terpenoid biosynthesis. Functionally, bifunctional terpene synthase that converts dimethylallyl diphosphate (DMAPP) and isopentenyl diphosphate (IPP) into astellifadiene. The C-terminal prenyltransferase (PT) domain of EvAS catalyzes formation of geranylfarnesyl pyrophosphate (GFPP), whereas the N-terminal terpene cyclase (TC) domain catalyzes the cyclization of GFPP to astellifadiene. The chain is Astellifadiene synthase from Emericella variicolor (Aspergillus stellatus).